Here is a 366-residue protein sequence, read N- to C-terminus: MAAVNTVSSLPCSKAGAAVAGGAPRPSTCSVFYPPRCWSKRSSGNGVRAQASTTETTAAPAAEVTTKVEKVSKKQVDGVVTNKYRPKEPYTGRCLLNTRITGDDAPGETWHMVFSTDGEIPYREGQSIGVIPDGIDKNGKPHKLRLYSIASSAIGDFADSKTVSLCVKRLVYTNDQGEIVKGVCSNFLCDLKPGSDVKITGPVGKEMLMPKDPNATIIMLGTGTGIAPFRSFLWKMFFEEHDDYKFNGLAWLFLGVPTSSTLLYREEFERMKEIAPERFRLDFAVSREQTNAAGEKMYIQTRMAEYKDELWELLKKDNTYVYMCGLKGMEKGIDDIMIDLAAKDGIDWLDYKKQLKKSEQWNVEVY.

Residues 1 to 48 constitute a chloroplast transit peptide; that stretch reads MAAVNTVSSLPCSKAGAAVAGGAPRPSTCSVFYPPRCWSKRSSGNGVR. Residues 87-209 form the FAD-binding FR-type domain; the sequence is KEPYTGRCLL…TGPVGKEMLM (123 aa). Residues 145-148, 166-168, Tyr172, and 183-185 contribute to the FAD site; these read RLYS, CVK, and VCS. 2 residues coordinate NADP(+): Ser148 and Lys168. Cys184 and Cys189 are disulfide-bonded. Phosphoserine is present on Ser185. Phosphothreonine is present on Thr216. Residue Thr224 coordinates FAD. NADP(+) contacts are provided by residues Thr224, 256-257, 286-287, Lys296, 325-326, and Glu364; these read VP, SR, and GL.

This sequence belongs to the ferredoxin--NADP reductase type 1 family. Heterodimer with LFNR1. Component of high molecular weight thylakoid LFNRs-containing protein complexes containing LIR1, LFNR1, LFNR2, TIC62 and TROL proteins. Interacts directly with LIR1 and TIC62; LIR1 increases the affinity of LFNR1 and LFNR2 for TIC62. It depends on FAD as a cofactor. May form interchain disulfide bonds with LIR1.

The protein resides in the plastid. It is found in the chloroplast stroma. The protein localises to the chloroplast thylakoid membrane. The enzyme catalyses 2 reduced [2Fe-2S]-[ferredoxin] + NADP(+) + H(+) = 2 oxidized [2Fe-2S]-[ferredoxin] + NADPH. Its pathway is energy metabolism; photosynthesis. In terms of biological role, plays a key role in regulating the relative amounts of cyclic and non-cyclic electron flow to meet the demands of the plant for ATP and reducing power. This Oryza sativa subsp. japonica (Rice) protein is Ferredoxin--NADP reductase, leaf isozyme 2, chloroplastic.